The sequence spans 447 residues: Adenylosuccinate synthetase (447 aa).

Residues 12 to 18 and 40 to 42 contribute to the GTP site; these read GDEGKGK and GHT. D13 serves as the catalytic Proton acceptor. Positions 13 and 40 each coordinate Mg(2+). Residues 13–16, 38–41, T128, R142, Q223, T238, and R302 each bind IMP; these read DEGK and NAGH. Catalysis depends on H41, which acts as the Proton donor. 298 to 304 contributes to the substrate binding site; it reads TTTGRKR. Residues R304, 330-332, and 412-414 contribute to the GTP site; these read KLD and SLG.

This sequence belongs to the adenylosuccinate synthetase family. Homodimer. Mg(2+) is required as a cofactor.

It is found in the cytoplasm. The catalysed reaction is IMP + L-aspartate + GTP = N(6)-(1,2-dicarboxyethyl)-AMP + GDP + phosphate + 2 H(+). It functions in the pathway purine metabolism; AMP biosynthesis via de novo pathway; AMP from IMP: step 1/2. Its function is as follows. Plays an important role in the de novo pathway of purine nucleotide biosynthesis. Catalyzes the first committed step in the biosynthesis of AMP from IMP. This chain is Adenylosuccinate synthetase, found in Trichormus variabilis (strain ATCC 29413 / PCC 7937) (Anabaena variabilis).